Here is a 650-residue protein sequence, read N- to C-terminus: Chaperone protein DnaK (650 aa).

Threonine 200 bears the Phosphothreonine; by autocatalysis mark. The segment covering 611-636 (AQQAGAAGAAGAAEGAAHAGGAQQAA) has biased composition (low complexity). The interval 611–637 (AQQAGAAGAAGAAEGAAHAGGAQQAAD) is disordered.

This sequence belongs to the heat shock protein 70 family.

Functionally, acts as a chaperone. In Burkholderia ambifaria (strain MC40-6), this protein is Chaperone protein DnaK.